Reading from the N-terminus, the 89-residue chain is Small ribosomal subunit protein uS15 (89 aa).

The protein belongs to the universal ribosomal protein uS15 family. Part of the 30S ribosomal subunit. Forms a bridge to the 50S subunit in the 70S ribosome, contacting the 23S rRNA.

In terms of biological role, one of the primary rRNA binding proteins, it binds directly to 16S rRNA where it helps nucleate assembly of the platform of the 30S subunit by binding and bridging several RNA helices of the 16S rRNA. Functionally, forms an intersubunit bridge (bridge B4) with the 23S rRNA of the 50S subunit in the ribosome. This is Small ribosomal subunit protein uS15 from Cellvibrio japonicus (strain Ueda107) (Pseudomonas fluorescens subsp. cellulosa).